The sequence spans 100 residues: Urease subunit gamma (100 aa).

Belongs to the urease gamma subunit family. In terms of assembly, heterotrimer of UreA (gamma), UreB (beta) and UreC (alpha) subunits. Three heterotrimers associate to form the active enzyme.

The protein resides in the cytoplasm. The enzyme catalyses urea + 2 H2O + H(+) = hydrogencarbonate + 2 NH4(+). It participates in nitrogen metabolism; urea degradation; CO(2) and NH(3) from urea (urease route): step 1/1. This chain is Urease subunit gamma, found in Actinobacillus pleuropneumoniae (Haemophilus pleuropneumoniae).